A 925-amino-acid polypeptide reads, in one-letter code: Probable replication restart protein PriA (925 aa).

Residues Cys645, Cys648, Cys654, Cys657, Cys672, Cys675, Cys685, and Cys688 each contribute to the Zn(2+) site.

The protein belongs to the helicase family. PriA subfamily. In terms of assembly, interacts with DnaB (DR_0549). Component of the replication restart primosome. The cofactor is Zn(2+).

Initiates the restart of stalled replication forks, which reloads the replicative helicase on sites other than the origin of replication. Recognizes abandoned replication forks and remodels them to uncover a helicase loading site. Promotes assembly of the primosome at these replication forks. Recognizes and binds DNA at stalled replication forks, also binds single-stranded (ss)DNA. This Deinococcus radiodurans (strain ATCC 13939 / DSM 20539 / JCM 16871 / CCUG 27074 / LMG 4051 / NBRC 15346 / NCIMB 9279 / VKM B-1422 / R1) protein is Probable replication restart protein PriA.